The sequence spans 144 residues: Putative pre-16S rRNA nuclease (144 aa).

This sequence belongs to the YqgF nuclease family.

It is found in the cytoplasm. Could be a nuclease involved in processing of the 5'-end of pre-16S rRNA. The polypeptide is Putative pre-16S rRNA nuclease (Blochmanniella pennsylvanica (strain BPEN)).